We begin with the raw amino-acid sequence, 915 residues long: Nitrate reductase [NADH] (915 aa).

Residues 1 to 102 form a disordered region; the sequence is MAASVEPRQP…PRDEGTADAW (102 aa). The span at 16–26 shows a compositional bias: low complexity; sequence APATAPTARAP. A compositionally biased stretch (acidic residues) spans 57 to 71; that stretch reads AEEEEDDDDEDDEGH. Basic and acidic residues predominate over residues 88–97; sequence PSTRDPRDEG. Cys189 contacts Mo-molybdopterin. The region spanning 538–613 is the Cytochrome b5 heme-binding domain; sequence DKQFTMSEVR…LDTYRIGELI (76 aa). Residues His573 and His596 each coordinate heme. In terms of domain architecture, FAD-binding FR-type spans 654-767; sequence REKVPCRLVD…KGPLGHVEYT (114 aa). FAD contacts are provided by residues 706 to 709, 723 to 727, Phe728, Phe735, 740 to 742, Ser791, and Thr794; these read RAYT, LVKVY, and LMT.

The protein belongs to the nitrate reductase family. As to quaternary structure, homodimer. FAD serves as cofactor. It depends on heme as a cofactor. Requires Mo-molybdopterin as cofactor.

It catalyses the reaction nitrite + NAD(+) + H2O = nitrate + NADH + H(+). Functionally, nitrate reductase is a key enzyme involved in the first step of nitrate assimilation in plants, fungi and bacteria. This is Nitrate reductase [NADH] from Hordeum vulgare (Barley).